We begin with the raw amino-acid sequence, 331 residues long: Hydroxysteroid dehydrogenase-like protein 1 (331 aa).

The interval 2 to 82 (AAVDRFNLLY…TGSTDGIGKA (81 aa)) is required for mitochondria translocation. NADP(+) contacts are provided by residues 74-80 (GSTDGIG) and Asp125. Substrate is bound at residue Ser205. Catalysis depends on Tyr218, which acts as the Proton acceptor. Lys222 serves as a coordination point for NADP(+).

It belongs to the short-chain dehydrogenases/reductases (SDR) family. 17-beta-HSD 3 subfamily.

It is found in the mitochondrion. Its function is as follows. May catalyze the metabolism of steroid hormones and thus play an important role in sex differentiation, the emergence and maintenance of the secondary sexual characters, and the regulation of endocrine. This chain is Hydroxysteroid dehydrogenase-like protein 1 (HSDL1), found in Gallus gallus (Chicken).